The sequence spans 257 residues: tRNA pseudouridine synthase A (257 aa).

Asp57 functions as the Nucleophile in the catalytic mechanism. Tyr115 provides a ligand contact to substrate.

The protein belongs to the tRNA pseudouridine synthase TruA family. In terms of assembly, homodimer.

It carries out the reaction uridine(38/39/40) in tRNA = pseudouridine(38/39/40) in tRNA. Its function is as follows. Formation of pseudouridine at positions 38, 39 and 40 in the anticodon stem and loop of transfer RNAs. The protein is tRNA pseudouridine synthase A of Lawsonia intracellularis (strain PHE/MN1-00).